The chain runs to 88 residues: Outer membrane protein H.8 (88 aa).

An N-terminal signal peptide occupies residues 1 to 17 (MKKSLFAAALLSLALAA). Cys-18 carries the N-palmitoyl cysteine lipid modification. Cys-18 carries S-diacylglycerol cysteine lipidation. Repeat copies occupy residues 23–27 (AAEAP), 28–32 (AAEAS), 33–37 (STEAP), 38–42 (AAEAP), 43–47 (AAEAP), 48–52 (AAEAA), 53–57 (AAEAP), 58–62 (AAEAP), 63–67 (AAEAP), 68–72 (AAEAA), 73–77 (ATEAP), 78–82 (AAEAP), and 83–87 (AAEAA). The 13 X 5 AA tandem repeats of [AS]-[AT]-E-A-[PAS] stretch occupies residues 23-87 (AAEAPAAEAS…AAEAPAAEAA (65 aa)). A disordered region spans residues 23-88 (AAEAPAAEAS…AEAPAAEAAK (66 aa)). The span at 25–88 (EAPAAEASST…AEAPAAEAAK (64 aa)) shows a compositional bias: low complexity.

It localises to the cell outer membrane. This is Outer membrane protein H.8 from Neisseria gonorrhoeae (strain ATCC 700825 / FA 1090).